The primary structure comprises 166 residues: Cold-inducible RNA-binding protein B (166 aa).

An RRM domain is found at Gly5–Lys83. Residues Gly68–Glu166 form a disordered region. Over residues Tyr92–Gly115 the composition is skewed to gly residues. Residues Gly133–Asp149 are compositionally biased toward low complexity. Residues Asp157–Glu166 show a composition bias toward basic and acidic residues.

Interacts with prmt1. Interacts with elavl1/elrA (via RRM3). Associates with ribosomes. Methylated on arginine residues within RGG motifs. Methylation by prmt1 promotes cytoplasmic accumulation. In terms of tissue distribution, in adults, most abundant in testis, ovary, brain and liver, with lower expression in kidney and heart.

It is found in the nucleus. The protein localises to the nucleoplasm. Its subcellular location is the cytoplasm. Its function is as follows. Cold-inducible mRNA binding protein. Acts cooperatively with elavl1/elrA to stabilize AU-rich element (ARE)-containing mRNAs by binding to them and inhibiting their deadenylation. Essential for embryonic gastrulation and neural development, acting to maintain the expression of a set of adhesion molecules, and cell movement during embryogenesis. Required for pronephros development. This Xenopus laevis (African clawed frog) protein is Cold-inducible RNA-binding protein B (cirbp-b).